The following is a 261-amino-acid chain: 4-hydroxy-tetrahydrodipicolinate reductase (261 aa).

9 to 14 provides a ligand contact to NAD(+); it reads GCLGRM. Arg36 is a binding site for NADP(+). NAD(+)-binding positions include 97–99 and 118–121; these read GTT and SANM. His151 (proton donor/acceptor) is an active-site residue. (S)-2,3,4,5-tetrahydrodipicolinate is bound at residue His152. Residue Lys155 is the Proton donor of the active site. 161–162 contacts (S)-2,3,4,5-tetrahydrodipicolinate; the sequence is GT.

It belongs to the DapB family.

The protein localises to the cytoplasm. It catalyses the reaction (S)-2,3,4,5-tetrahydrodipicolinate + NAD(+) + H2O = (2S,4S)-4-hydroxy-2,3,4,5-tetrahydrodipicolinate + NADH + H(+). The enzyme catalyses (S)-2,3,4,5-tetrahydrodipicolinate + NADP(+) + H2O = (2S,4S)-4-hydroxy-2,3,4,5-tetrahydrodipicolinate + NADPH + H(+). The protein operates within amino-acid biosynthesis; L-lysine biosynthesis via DAP pathway; (S)-tetrahydrodipicolinate from L-aspartate: step 4/4. Functionally, catalyzes the conversion of 4-hydroxy-tetrahydrodipicolinate (HTPA) to tetrahydrodipicolinate. This Wolbachia sp. subsp. Drosophila simulans (strain wRi) protein is 4-hydroxy-tetrahydrodipicolinate reductase.